The sequence spans 297 residues: GTPase Era (297 aa).

An Era-type G domain is found at 7–174; the sequence is RSGFVSIIGR…VEVVHGFIPA (168 aa). The tract at residues 15 to 22 is G1; the sequence is GRPNVGKS. 15–22 serves as a coordination point for GTP; it reads GRPNVGKS. A G2 region spans residues 41–45; the sequence is QTTRN. Positions 62–65 are G3; sequence DTPG. GTP is bound by residues 62–66 and 124–127; these read DTPGI and NKID. The G4 stretch occupies residues 124-127; sequence NKID. The segment at 153 to 155 is G5; the sequence is VSA. Residues 205 to 282 form the KH type-2 domain; it reads THDEVPYSVA…FLELFVRVSK (78 aa).

Belongs to the TRAFAC class TrmE-Era-EngA-EngB-Septin-like GTPase superfamily. Era GTPase family. Monomer.

It localises to the cytoplasm. It is found in the cell inner membrane. Its function is as follows. An essential GTPase that binds both GDP and GTP, with rapid nucleotide exchange. Plays a role in 16S rRNA processing and 30S ribosomal subunit biogenesis and possibly also in cell cycle regulation and energy metabolism. The sequence is that of GTPase Era from Geotalea uraniireducens (strain Rf4) (Geobacter uraniireducens).